We begin with the raw amino-acid sequence, 272 residues long: Putative pyruvate, phosphate dikinase regulatory protein 2 (272 aa).

Residue G154 to T161 participates in ADP binding.

It belongs to the pyruvate, phosphate/water dikinase regulatory protein family. PDRP subfamily.

The catalysed reaction is N(tele)-phospho-L-histidyl/L-threonyl-[pyruvate, phosphate dikinase] + ADP = N(tele)-phospho-L-histidyl/O-phospho-L-threonyl-[pyruvate, phosphate dikinase] + AMP + H(+). It carries out the reaction N(tele)-phospho-L-histidyl/O-phospho-L-threonyl-[pyruvate, phosphate dikinase] + phosphate + H(+) = N(tele)-phospho-L-histidyl/L-threonyl-[pyruvate, phosphate dikinase] + diphosphate. In terms of biological role, bifunctional serine/threonine kinase and phosphorylase involved in the regulation of the pyruvate, phosphate dikinase (PPDK) by catalyzing its phosphorylation/dephosphorylation. This Staphylococcus epidermidis (strain ATCC 35984 / DSM 28319 / BCRC 17069 / CCUG 31568 / BM 3577 / RP62A) protein is Putative pyruvate, phosphate dikinase regulatory protein 2.